A 222-amino-acid polypeptide reads, in one-letter code: UPF0173 metal-dependent hydrolase Mboo_0816 (222 aa).

It belongs to the UPF0173 family.

This is UPF0173 metal-dependent hydrolase Mboo_0816 from Methanoregula boonei (strain DSM 21154 / JCM 14090 / 6A8).